The primary structure comprises 265 residues: MKLGVNIDHIAVLREARKINDPDPIEALPIVKRAGADQITIHLREDRRHINDFDAKRIIEYSSLPVNMECSIDPDIIDIVAQLKPHRATLVPEKREEVTTEGGLDVIGQYERISDAIEKLKANEIDVSLFIDPDIEIIAACADTGADMVELHTGEYANIYAMLYSNLSKTPHSIKSLELSRKELQEKLSIAIGDLENAAIYAAKSGLLVAAGHGLNYQNVGTIAAMANIIELNIGQSIIARSIWDGLFEAVRKMKEIIDEAGHCH.

Residue Asn6 participates in 3-amino-2-oxopropyl phosphate binding. 8–9 (DH) serves as a coordination point for 1-deoxy-D-xylulose 5-phosphate. Arg17 is a binding site for 3-amino-2-oxopropyl phosphate. His42 serves as the catalytic Proton acceptor. 1-deoxy-D-xylulose 5-phosphate contacts are provided by Arg44 and His49. Glu69 serves as the catalytic Proton acceptor. 1-deoxy-D-xylulose 5-phosphate is bound at residue Thr99. His213 (proton donor) is an active-site residue. 3-amino-2-oxopropyl phosphate contacts are provided by residues Gly214 and 235–236 (GQ).

The protein belongs to the PNP synthase family. In terms of assembly, homooctamer; tetramer of dimers.

The protein resides in the cytoplasm. It carries out the reaction 3-amino-2-oxopropyl phosphate + 1-deoxy-D-xylulose 5-phosphate = pyridoxine 5'-phosphate + phosphate + 2 H2O + H(+). It functions in the pathway cofactor biosynthesis; pyridoxine 5'-phosphate biosynthesis; pyridoxine 5'-phosphate from D-erythrose 4-phosphate: step 5/5. Functionally, catalyzes the complicated ring closure reaction between the two acyclic compounds 1-deoxy-D-xylulose-5-phosphate (DXP) and 3-amino-2-oxopropyl phosphate (1-amino-acetone-3-phosphate or AAP) to form pyridoxine 5'-phosphate (PNP) and inorganic phosphate. The polypeptide is Pyridoxine 5'-phosphate synthase (Nitratiruptor sp. (strain SB155-2)).